The sequence spans 145 residues: 3-hydroxyacyl-[acyl-carrier-protein] dehydratase FabZ (145 aa).

The active site involves H48.

The protein belongs to the thioester dehydratase family. FabZ subfamily.

The protein localises to the cytoplasm. It carries out the reaction a (3R)-hydroxyacyl-[ACP] = a (2E)-enoyl-[ACP] + H2O. In terms of biological role, involved in unsaturated fatty acids biosynthesis. Catalyzes the dehydration of short chain beta-hydroxyacyl-ACPs and long chain saturated and unsaturated beta-hydroxyacyl-ACPs. The polypeptide is 3-hydroxyacyl-[acyl-carrier-protein] dehydratase FabZ (Cellvibrio japonicus (strain Ueda107) (Pseudomonas fluorescens subsp. cellulosa)).